The sequence spans 117 residues: Ribonuclease P protein component (117 aa).

This sequence belongs to the RnpA family. In terms of assembly, consists of a catalytic RNA component (M1 or rnpB) and a protein subunit.

The enzyme catalyses Endonucleolytic cleavage of RNA, removing 5'-extranucleotides from tRNA precursor.. In terms of biological role, RNaseP catalyzes the removal of the 5'-leader sequence from pre-tRNA to produce the mature 5'-terminus. It can also cleave other RNA substrates such as 4.5S RNA. The protein component plays an auxiliary but essential role in vivo by binding to the 5'-leader sequence and broadening the substrate specificity of the ribozyme. The sequence is that of Ribonuclease P protein component from Staphylococcus aureus (strain bovine RF122 / ET3-1).